The primary structure comprises 521 residues: Cyclic AMP-responsive element-binding protein 3-like protein 2 (521 aa).

The Cytoplasmic portion of the chain corresponds to 1–378 (MEVLESGEQS…CKLAGTQTGT (378 aa)). The segment covering 83–103 (YSLSEEPRTQSPFTHAATSDS) has biased composition (polar residues). Residues 83-106 (YSLSEEPRTQSPFTHAATSDSFND) form a disordered region. A Phosphoserine modification is found at S93. Residue K178 forms a Glycyl lysine isopeptide (Lys-Gly) (interchain with G-Cter in SUMO2) linkage. Residue S191 is modified to Phosphoserine. The tract at residues 196 to 264 (SVDQLHLPPT…PHKLQGSGPL (69 aa)) is disordered. A compositionally biased stretch (low complexity) spans 208-220 (SSHSSDSEGSLSP). The 64-residue stretch at 294 to 357 (ALKKIRRKIK…RTLLQQLQKL (64 aa)) folds into the bZIP domain. The basic motif stretch occupies residues 296 to 325 (KKIRRKIKNKISAQESRRKKKEYMDSLEKK). Positions 336 to 357 (LRKKVEVLENTNRTLLQQLQKL) are leucine-zipper. Residues 379–399 (CLMVVVLCFAVAFGSFFQGYG) form a helical; Signal-anchor for type II membrane protein membrane-spanning segment. At 400-521 (PYPSATKMAL…ELERRVNATF (122 aa)) the chain is on the lumenal side. The short motif at 427-430 (RNLL) is the S1P recognition element. N-linked (GlcNAc...) asparagine glycosylation is found at N481, N505, and N518.

This sequence belongs to the bZIP family. ATF subfamily. In terms of assembly, binds DNA as a dimer. In terms of processing, upon ER stress, translocated to the Golgi apparatus, where it is processed by regulated intramembrane proteolysis (RIP) to release the cytosol-facing N-terminal transcription factor domain. The cleavage is performed sequentially by site-1 and site-2 proteases (S1P/MBTPS1 and S2P/MBTPS2). N-glycosylated. Post-translationally, ubiquitinated by HRD1/SYVN1; undergoes 'Lys-48'-linked ubiquitination, followed by rapid proteasomal degradation under normal conditions. Upon ER stress, SYVN1 E3 ubiquitin-protein ligase dissociates from its substrate, ubiquitination does not occur and CREB3L2 is stabilized. As to expression, widely expressed, including in lung, bladder, ovary, testis and spleen. Highly expressed in chondrocytes.

The protein resides in the endoplasmic reticulum membrane. It localises to the nucleus. In terms of biological role, transcription factor involved in unfolded protein response (UPR). In the absence of endoplasmic reticulum (ER) stress, inserted into ER membranes, with N-terminal DNA-binding and transcription activation domains oriented toward the cytosolic face of the membrane. In response to ER stress, transported to the Golgi, where it is cleaved in a site-specific manner by resident proteases S1P/MBTPS1 and S2P/MBTPS2. The released N-terminal cytosolic domain is translocated to the nucleus to effect transcription of specific target genes. Plays a critical role in chondrogenesis by activating the transcription of SEC23A, which promotes the transport and secretion of cartilage matrix proteins, and possibly that of ER biogenesis-related genes. In a neuroblastoma cell line, protects cells from ER stress-induced death. In vitro activates transcription of target genes via direct binding to the CRE site. This chain is Cyclic AMP-responsive element-binding protein 3-like protein 2 (Creb3l2), found in Mus musculus (Mouse).